Consider the following 1238-residue polypeptide: DNA-directed RNA polymerase subunit beta (1238 aa).

The tract at residues 1186–1238 (IEGREDTPPEEVYEEGYEEGFEEESEELPEDIDFEPDSFDIENDDLDLEDFDI) is disordered. The span at 1193–1238 (PPEEVYEEGYEEGFEEESEELPEDIDFEPDSFDIENDDLDLEDFDI) shows a compositional bias: acidic residues.

This sequence belongs to the RNA polymerase beta chain family. As to quaternary structure, the RNAP catalytic core consists of 2 alpha, 1 beta, 1 beta' and 1 omega subunit. When a sigma factor is associated with the core the holoenzyme is formed, which can initiate transcription.

It catalyses the reaction RNA(n) + a ribonucleoside 5'-triphosphate = RNA(n+1) + diphosphate. Functionally, DNA-dependent RNA polymerase catalyzes the transcription of DNA into RNA using the four ribonucleoside triphosphates as substrates. The polypeptide is DNA-directed RNA polymerase subunit beta (Thermoanaerobacter sp. (strain X514)).